We begin with the raw amino-acid sequence, 617 residues long: MTLTSASTVVGGLDANAPQTISGAAALMDALRRHGVDTIFGYPGGAILPIYDALHIAESEGWVKHILVRHEQAGTHAADAYARATGKVGVCFGTSGPGATNLVTGIATAQMDSVPMVVITGQVPRPAIGTDAFQETDIFGITLPIVKHSWVVRDPADLGSIVAQAFLIAASGRPGPVLIDIPKDVGQEQFNYVPVEPGSVIPGGFHQPEPPLDAAVAAALDLIEQAQRPLLYVGGGAISACAHDSLRMLAERYQLPVTTTLMGKGAFDENDALSVGMLGMHGTAYANFAVTECDLLIAVGARFDDRVTGKLDTFAPRARVVHFEIDPAEIGKNRKADVAVLGDLGLSLARMVEISLQRTAEPRTAAWLERINTWKDRYPLTIPPAEGAIYPQEVLLAVRDLAPDAIVTTDVGQHQMWAAQHLRNGPRGWISSAGLGTMGFGMPAAMGAQVAMPDRQVVCIAGDASILMNIQELGTLAAYGLPVKVVIVNNHWQGMVRQWQESFYDERYSASDMLNGMPDFIALARSFGVDGVKITDRELLHRDLAAALQSPTPTMIDVHVRRGENCYPMVPPGKSNAQMVGLPSHPELAMGTTRTCSSCGAITAHEHRFCPQCGASL.

E71 contacts thiamine diphosphate. Residues R173, 281–302 (HGTA…VGAR), and 324–343 (EIDP…VLGD) contribute to the FAD site. The thiamine pyrophosphate binding stretch occupies residues 413–492 (QHQMWAAQHL…VKVVIVNNHW (80 aa)). Mg(2+) contacts are provided by D463 and N490.

This sequence belongs to the TPP enzyme family. Dimer of large and small chains. The cofactor is Mg(2+). Thiamine diphosphate serves as cofactor.

It carries out the reaction 2 pyruvate + H(+) = (2S)-2-acetolactate + CO2. Its pathway is amino-acid biosynthesis; L-isoleucine biosynthesis; L-isoleucine from 2-oxobutanoate: step 1/4. It participates in amino-acid biosynthesis; L-valine biosynthesis; L-valine from pyruvate: step 1/4. The chain is Acetolactate synthase large subunit (ilvB) from Parasynechococcus marenigrum (strain WH8102).